The sequence spans 271 residues: MPELPEVETTLRGLSPHLVGQRIHGVILRRPDLRWPIPEQIERLLPGATITNVRRRAKYLLIDTDAGGSALLHLGMSGSLRVLPGDTLPRAHDHVDISLQNGRVLRFNDPRRFGCLLWQSDIQAHELLAALGPEPLSEAFTGDYLHALAYGRRAPVKTFLMDQAVVVGVGNIYAAESLHCAGISPLREAGKVSLDRYRRLAAAVKDILSYAIRRGGTTLRDFISPDGAPGYFEQELTVYGREGEPCKQCGRVLKHAMIGQRATVWCGSCQR.

Proline 2 (schiff-base intermediate with DNA) is an active-site residue. The Proton donor role is filled by glutamate 3. The Proton donor; for beta-elimination activity role is filled by lysine 58. Residues histidine 92, arginine 111, and arginine 152 each coordinate DNA. The FPG-type zinc-finger motif lies at 237–271 (TVYGREGEPCKQCGRVLKHAMIGQRATVWCGSCQR). Residue arginine 261 is the Proton donor; for delta-elimination activity of the active site.

It belongs to the FPG family. As to quaternary structure, monomer. Zn(2+) serves as cofactor.

It carries out the reaction Hydrolysis of DNA containing ring-opened 7-methylguanine residues, releasing 2,6-diamino-4-hydroxy-5-(N-methyl)formamidopyrimidine.. The enzyme catalyses 2'-deoxyribonucleotide-(2'-deoxyribose 5'-phosphate)-2'-deoxyribonucleotide-DNA = a 3'-end 2'-deoxyribonucleotide-(2,3-dehydro-2,3-deoxyribose 5'-phosphate)-DNA + a 5'-end 5'-phospho-2'-deoxyribonucleoside-DNA + H(+). Involved in base excision repair of DNA damaged by oxidation or by mutagenic agents. Acts as a DNA glycosylase that recognizes and removes damaged bases. Has a preference for oxidized purines, such as 7,8-dihydro-8-oxoguanine (8-oxoG). Has AP (apurinic/apyrimidinic) lyase activity and introduces nicks in the DNA strand. Cleaves the DNA backbone by beta-delta elimination to generate a single-strand break at the site of the removed base with both 3'- and 5'-phosphates. The sequence is that of Formamidopyrimidine-DNA glycosylase from Xanthomonas oryzae pv. oryzae (strain MAFF 311018).